Consider the following 368-residue polypeptide: Agmatine deiminase (368 aa).

C357 acts as the Amidino-cysteine intermediate in catalysis.

Belongs to the agmatine deiminase family. As to quaternary structure, homodimer.

The catalysed reaction is agmatine + H2O = N-carbamoylputrescine + NH4(+). Its pathway is amine and polyamine biosynthesis; putrescine biosynthesis via agmatine pathway; N-carbamoylputrescine from agmatine: step 1/1. Functionally, mediates the hydrolysis of agmatine into N-carbamoylputrescine in the arginine decarboxylase (ADC) pathway of putrescine biosynthesis, a basic polyamine. This is Agmatine deiminase from Pseudomonas fluorescens (strain SBW25).